The sequence spans 548 residues: Zinc metalloproteinase (548 aa).

The first 28 residues, 1 to 28, serve as a signal peptide directing secretion; it reads MKKYYAVTGIALAVGMLCTTQLAGATQA. Histidine 362 serves as a coordination point for Zn(2+). Residue glutamate 363 is part of the active site. Zn(2+) is bound by residues histidine 366 and glutamate 386. Residues 440 to 459 form a disordered region; sequence SNWKPTATNPNDNNDQGGVH. Residues 442 to 459 show a composition bias toward polar residues; sequence WKPTATNPNDNNDQGGVH. Histidine 459 (proton donor) is an active-site residue.

It belongs to the peptidase M4 family. Ca(2+) is required as a cofactor. Requires Zn(2+) as cofactor.

It localises to the secreted. Its subcellular location is the cell wall. Its function is as follows. Zinc metalloprotease with hemolytic properties. This chain is Zinc metalloproteinase (hly), found in Renibacterium salmoninarum.